The chain runs to 2335 residues: Pre-mRNA-processing-splicing factor 8 (2335 aa).

N-acetylalanine is present on Ala2. The tract at residues 812-1303 is reverse transcriptase homology domain; sequence TTVHWLESRR…KIQTRIKIGL (492 aa). Phosphoserine is present on residues Ser859 and Ser1358. The segment at 1304–1577 is linker; sequence NSKMPSRFPP…TLKISLIQIF (274 aa). Residue Lys1425 is modified to N6,N6-dimethyllysine. N6-acetyllysine is present on Lys1463. Residues 1513-1526 form an important for branch point selection region; that stretch reads MKWKKLTNAQRSGL. The interval 1581–1752 is restriction endonuclease homology domain; it reads LWQKIHESIV…LRERIRKGLQ (172 aa). An involved in interaction with pre-mRNA 5' splice site region spans residues 1669–2034; sequence GDYDSHDIER…QIAEIEKQTK (366 aa). The RNase H homology domain stretch occupies residues 1767–2020; that stretch reads NYGELFSNQI…ILGMEISAPS (254 aa). Positions 2103-2234 constitute an MPN domain; the sequence is TYILPKNVLK…LTAYKLTPSG (132 aa). The tract at residues 2301 to 2335 is required for interaction with EFTUD2 and SNRNP200; it reads PKEFYHEVHRPSHFLNFALLQEGEVYSADREDLYA.

Part of the U5 snRNP complex. Component of the U4/U6-U5 tri-snRNP complex composed of the U4, U6 and U5 snRNAs and at least PRPF3, PRPF4, PRPF6, PRPF8, PRPF31, SNRNP200, TXNL4A, SNRNP40, DDX23, CD2BP2, PPIH, SNU13, EFTUD2, SART1 and USP39. Component of the U5.U4atac/U6atac snRNP complexes in U12-dependent spliceosomes. Within the minor spliceosome, which acts on U12-type introns, interacts with PPIL2 and RBM48. Core component of U2-type precatalytic, catalytic and postcatalytic spliceosomal complexes. Found in a mRNA splicing-dependent exon junction complex (EJC) with SRRM1. Interacts with U5 snRNP proteins SNRP116 and SNRNP40. Interacts with EFTUD2. Interacts (via the MPN (JAB/Mov34) domain) with PRPF3 ('Lys-63'-linked polyubiquitinated); may stabilize the U4/U6-U5 tri-snRNP complex. Interacts (via RNase H homology domain) with AAR2. Interacts with RPAP3 and URI1 in a ZNHIT2-dependent manner. Interacts with C9orf78. Interacts with SNRNP200; the interaction is direct. Interacts with TSSC4; the interaction is direct. In terms of tissue distribution, widely expressed.

The protein localises to the nucleus. It localises to the nucleus speckle. Functionally, plays a role in pre-mRNA splicing as core component of precatalytic, catalytic and postcatalytic spliceosomal complexes, both of the predominant U2-type spliceosome and the minor U12-type spliceosome. Functions as a scaffold that mediates the ordered assembly of spliceosomal proteins and snRNAs. Required for the assembly of the U4/U6-U5 tri-snRNP complex, a building block of the spliceosome. Functions as a scaffold that positions spliceosomal U2, U5 and U6 snRNAs at splice sites on pre-mRNA substrates, so that splicing can occur. Interacts with both the 5' and the 3' splice site. This Homo sapiens (Human) protein is Pre-mRNA-processing-splicing factor 8 (PRPF8).